Reading from the N-terminus, the 225-residue chain is UPF0758 protein Swoo_4561 (225 aa).

The 123-residue stretch at 102–224 folds into the MPN domain; it reads ILSDPDLTRD…IVSFAERGWI (123 aa). The Zn(2+) site is built by His173, His175, and Asp186. The short motif at 173–186 is the JAMM motif element; it reads HNHPSGVAEPSHAD.

Belongs to the UPF0758 family.

The sequence is that of UPF0758 protein Swoo_4561 from Shewanella woodyi (strain ATCC 51908 / MS32).